A 440-amino-acid chain; its full sequence is Transposon Ty1-DR1 Gag polyprotein (440 aa).

Composition is skewed to polar residues over residues 1 to 10 (MESQQLSNYP), 48 to 60 (TKAN…TPAS), and 127 to 152 (QSQF…GNTF). Disordered regions lie at residues 1–93 (MESQ…MMTQ), 126–173 (PQSQ…RPPP), and 352–440 (GSRN…PGTY). Low complexity predominate over residues 153–165 (TDSSSADSDMTST). The segment at 299-401 (NNGIHINNKV…NSKSKTARAH (103 aa)) is RNA-binding. A compositionally biased stretch (low complexity) spans 402–418 (NVSTSNNSPSTDNDSIS). A Phosphoserine modification is found at Ser-416. Residues 419–428 (KSTTEPIQLN) are compositionally biased toward polar residues. A compositionally biased stretch (basic and acidic residues) spans 429–440 (NKHDLHLRPGTY).

In terms of assembly, homotrimer.

It is found in the cytoplasm. Its function is as follows. Capsid protein (CA) is the structural component of the virus-like particle (VLP), forming the shell that encapsulates the retrotransposons dimeric RNA genome. The particles are assembled from trimer-clustered units and there are holes in the capsid shells that allow for the diffusion of macromolecules. CA also has nucleocapsid-like chaperone activity, promoting primer tRNA(i)-Met annealing to the multipartite primer-binding site (PBS), dimerization of Ty1 RNA and initiation of reverse transcription. The chain is Transposon Ty1-DR1 Gag polyprotein (TY1A-DR1) from Saccharomyces cerevisiae (strain ATCC 204508 / S288c) (Baker's yeast).